We begin with the raw amino-acid sequence, 215 residues long: ATP-dependent Clp protease proteolytic subunit 1 (215 aa).

The active-site Nucleophile is the Ser-108. His-133 is a catalytic residue.

This sequence belongs to the peptidase S14 family. Fourteen ClpP subunits assemble into 2 heptameric rings which stack back to back to give a disk-like structure with a central cavity, resembling the structure of eukaryotic proteasomes.

It localises to the cytoplasm. The catalysed reaction is Hydrolysis of proteins to small peptides in the presence of ATP and magnesium. alpha-casein is the usual test substrate. In the absence of ATP, only oligopeptides shorter than five residues are hydrolyzed (such as succinyl-Leu-Tyr-|-NHMec, and Leu-Tyr-Leu-|-Tyr-Trp, in which cleavage of the -Tyr-|-Leu- and -Tyr-|-Trp bonds also occurs).. Functionally, cleaves peptides in various proteins in a process that requires ATP hydrolysis. Has a chymotrypsin-like activity. Plays a major role in the degradation of misfolded proteins. The protein is ATP-dependent Clp protease proteolytic subunit 1 of Paraburkholderia xenovorans (strain LB400).